The following is a 147-amino-acid chain: MKALVILGFLFLSVAVQGKVFERCELARTLKKLGLDGYKGVSLANWLCLTKWESSYNTKATNYNPSSESTDYGIFQINSKWWCNDGKTPNAVDGCHVSCRELMENDIAKAVACAKHIVSEQGITAWVAWKSHCRDHDVSSYVEGCTL.

A signal peptide spans 1 to 18; that stretch reads MKALVILGFLFLSVAVQG. In terms of domain architecture, C-type lysozyme spans 19–147; sequence KVFERCELAR…VSSYVEGCTL (129 aa). 4 disulfides stabilise this stretch: Cys-24–Cys-145, Cys-48–Cys-133, Cys-83–Cys-99, and Cys-95–Cys-113. Active-site residues include Glu-53 and Asp-71.

It belongs to the glycosyl hydrolase 22 family. In terms of assembly, monomer. In terms of tissue distribution, stomach-specific.

The enzyme catalyses Hydrolysis of (1-&gt;4)-beta-linkages between N-acetylmuramic acid and N-acetyl-D-glucosamine residues in a peptidoglycan and between N-acetyl-D-glucosamine residues in chitodextrins.. Lysozymes have primarily a bacteriolytic function; those in tissues and body fluids are associated with the monocyte-macrophage system and enhance the activity of immunoagents. This chain is Lysozyme C (LYZ1), found in Bos taurus (Bovine).